Here is a 445-residue protein sequence, read N- to C-terminus: Phosphoglucosamine mutase (445 aa).

Catalysis depends on Ser101, which acts as the Phosphoserine intermediate. Mg(2+) is bound by residues Ser101, Asp240, Asp242, and Asp244. Residue Ser101 is modified to Phosphoserine.

It belongs to the phosphohexose mutase family. Mg(2+) serves as cofactor. Activated by phosphorylation.

It carries out the reaction alpha-D-glucosamine 1-phosphate = D-glucosamine 6-phosphate. In terms of biological role, catalyzes the conversion of glucosamine-6-phosphate to glucosamine-1-phosphate. This chain is Phosphoglucosamine mutase, found in Pseudomonas paraeruginosa (strain DSM 24068 / PA7) (Pseudomonas aeruginosa (strain PA7)).